Reading from the N-terminus, the 105-residue chain is Heat shock protein HspQ (105 aa).

Positions 84-105 (QPKLDELSASIKKQLKTPRLRN) are disordered. Basic residues predominate over residues 96-105 (KQLKTPRLRN).

Belongs to the HspQ family.

It is found in the cytoplasm. In terms of biological role, involved in the degradation of certain denaturated proteins, including DnaA, during heat shock stress. The sequence is that of Heat shock protein HspQ from Wigglesworthia glossinidia brevipalpis.